We begin with the raw amino-acid sequence, 282 residues long: Small ribosomal subunit protein uS2 (282 aa).

The tract at residues 260 to 282 is disordered; that stretch reads KRRRSKVYKEEEREVVTNEDESR. Over residues 266–282 the composition is skewed to basic and acidic residues; that stretch reads VYKEEEREVVTNEDESR.

It belongs to the universal ribosomal protein uS2 family.

The polypeptide is Small ribosomal subunit protein uS2 (Wolbachia pipientis wMel).